The sequence spans 235 residues: Sperm-associated microtubule inner protein 5 (235 aa).

As to quaternary structure, microtubule inner protein component of sperm flagellar doublet microtubules. As to expression, expressed in sperm.

The protein localises to the cytoplasm. It localises to the cytoskeleton. The protein resides in the flagellum axoneme. Its subcellular location is the nucleus. Functionally, microtubule inner protein (MIP) part of the dynein-decorated doublet microtubules (DMTs) in flagellum axoneme. May serve to reinforce and thus stabilize the microtubule structure in the sperm flagella. In Bos taurus (Bovine), this protein is Sperm-associated microtubule inner protein 5 (SPMIP5).